Consider the following 551-residue polypeptide: MPSARLQQQFIRLWQCCEGKSQDTTLNELAALLSCSRRHMRTLLNTMQDRGWLTWEAEVGRGKRSRLTFLYTGLALQQQRAEDLLEQDRIDQLVQLVGDKATVRQMLVSHLGRSFRQGRHILRVLYYRPLRNLLPGSALRRSETHIARQIFSSLTRINEENGELEADIAHHWQQISPLHWRFFLRPGVHFHHGRELEMDDVIASLKRINTLPLYSHIADIVSPTPWTLDIHLTQPDRWLPLLLGQVPAMILPREWETLSNFASHPIGTGPYAVIRNSTNQLKIQAFDDFFGYRALIDEVNVWVLPEIADEPAGGLMLKGPQGEEKEIESRLEEGCYYLLFDSRTHRGANQQVRDWVSYVLSPTNLVYFAEEQYQQLWFPAYGLLPRWHHARTIKSEKPAGLESLTLTFYQDHSEHRVIAGIMQQILASHQVTLKIKEIDYDQWHTGEIESDIWLNSANFTLPLDFSVFAHLCEVPLLQHCIPIDWQADAARWRNGEMNLANWCQQLVASKAMVPLLHHWLIIQGQRSMRGLRMNTLGWFDFKSAWFAPPDP.

The HTH marR-type domain occupies 1–116 (MPSARLQQQF…LVSHLGRSFR (116 aa)). The H-T-H motif DNA-binding region spans 26-49 (LNELAALLSCSRRHMRTLLNTMQD). The segment at 163-492 (ELEADIAHHW…IDWQADAARW (330 aa)) is solute-binding.

In terms of biological role, activates the small RNA gene sgrS under glucose-phosphate stress conditions as well as yfdZ. Represses its own transcription under both stress and non-stress conditions; this repression likely provides one measure of control over sgrR at the level of synthesis. Might act as a sensor of the intracellular accumulation of phosphoglucose by binding these molecules in its C-terminal solute-binding domain. In Escherichia coli (strain K12), this protein is HTH-type transcriptional regulator SgrR (sgrR).